A 397-amino-acid polypeptide reads, in one-letter code: Lysophospholipid transporter LplT (397 aa).

Residues 1-17 (MSESVHTNTSLWSKGMK) lie on the Periplasmic side of the membrane. Residues 18-38 (AVIVAQFLSAFGDNALLFATL) traverse the membrane as a helical segment. Topologically, residues 39–52 (ALLKAQFYPEWSQP) are cytoplasmic. Residues 53 to 73 (ILQMVFVGAYILFAPFVGQVA) form a helical membrane-spanning segment. The Periplasmic segment spans residues 74-90 (DSFAKGRVMMFANGLKL). The helical transmembrane segment at 91 to 111 (LGAASICFGINPFLGYTLVGV) threads the bilayer. Residues 112–144 (GAAAYSPAKYGILGELTTGSKLVKANGLMEAST) are Cytoplasmic-facing. The helical transmembrane segment at 145-165 (IAAILLGSVAGGVLADWHVLV) threads the bilayer. Residue alanine 166 is a topological domain, periplasmic. Residues 167 to 187 (LAACALAYGGAVVANIYIPKL) form a helical membrane-spanning segment. At 188–226 (AAARPGQSWNLINMTRSFLNACTSLWRNGETRFSLVGTS) the chain is on the cytoplasmic side. A helical membrane pass occupies residues 227–247 (LFWGAGVTLRFLLVLWVPVAL). The Periplasmic segment spans residues 248–256 (GITDNATPT). The helical transmembrane segment at 257–277 (YLNAMVAIGIVVGAGAAAKLV) threads the bilayer. Residues 278–280 (TLE) lie on the Cytoplasmic side of the membrane. Residues 281–301 (TVSRCMPAGILIGVVVLIFSL) form a helical membrane-spanning segment. Over 302 to 304 (QHE) the chain is Periplasmic. A helical transmembrane segment spans residues 305–325 (LLPAYALLMLIGVLGGFFVVP). Topologically, residues 326-343 (LNALLQERGKKSVGAGNA) are cytoplasmic. Residues 344–364 (IAVQNLGENSAMLLMLGIYSL) form a helical membrane-spanning segment. The Periplasmic portion of the chain corresponds to 365-366 (AV). Residues 367 to 387 (MVGIPVVPIGIGFGALFALAI) form a helical membrane-spanning segment. Over 388 to 397 (TALWIWQRRH) the chain is Cytoplasmic.

The protein belongs to the major facilitator superfamily. LplT (TC 2.A.1.42) family.

It is found in the cell inner membrane. Its function is as follows. Catalyzes the facilitated diffusion of 2-acyl-glycero-3-phosphoethanolamine (2-acyl-GPE) into the cell. The chain is Lysophospholipid transporter LplT from Escherichia coli (strain SMS-3-5 / SECEC).